Reading from the N-terminus, the 407-residue chain is Imidazolonepropionase (407 aa).

Positions 74 and 76 each coordinate Fe(3+). Residues His-74 and His-76 each coordinate Zn(2+). 3 residues coordinate 4-imidazolone-5-propanoate: Arg-83, Tyr-146, and His-179. Position 146 (Tyr-146) interacts with N-formimidoyl-L-glutamate. Residue His-244 participates in Fe(3+) binding. A Zn(2+)-binding site is contributed by His-244. Gln-247 contacts 4-imidazolone-5-propanoate. Asp-319 is a binding site for Fe(3+). Residue Asp-319 coordinates Zn(2+). The N-formimidoyl-L-glutamate site is built by Asn-321 and Gly-323. Thr-324 is a binding site for 4-imidazolone-5-propanoate.

This sequence belongs to the metallo-dependent hydrolases superfamily. HutI family. Requires Zn(2+) as cofactor. Fe(3+) is required as a cofactor.

The protein localises to the cytoplasm. The catalysed reaction is 4-imidazolone-5-propanoate + H2O = N-formimidoyl-L-glutamate. It functions in the pathway amino-acid degradation; L-histidine degradation into L-glutamate; N-formimidoyl-L-glutamate from L-histidine: step 3/3. Catalyzes the hydrolytic cleavage of the carbon-nitrogen bond in imidazolone-5-propanoate to yield N-formimidoyl-L-glutamate. It is the third step in the universal histidine degradation pathway. The protein is Imidazolonepropionase of Salmonella paratyphi C (strain RKS4594).